The primary structure comprises 321 residues: uncharacterized protein (321 aa).

The HTH lacI-type domain maps to 1-56 (MANIKDIAEKAGVSVTTVSRVINNHPYVSEDKRKRVFEAMESLEYTRNIHAVHLSK). A DNA-binding region (H-T-H motif) is located at residues 4 to 23 (IKDIAEKAGVSVTTVSRVIN).

This is an uncharacterized protein from Bacillus subtilis (strain 168).